Here is a 133-residue protein sequence, read N- to C-terminus: Brain natriuretic peptide (133 aa).

The N-terminal stretch at 1–22 (MVVSFVSICGLLLIFNLPLSTS) is a signal peptide. Residues 44–53 (SMSEETEEDQ) show a composition bias toward acidic residues. Disordered stretches follow at residues 44–76 (SMSE…NRDQ) and 93–112 (TRKN…FGRR). A disulfide bond links Cys108 and Cys124.

The protein belongs to the natriuretic peptide family.

It is found in the secreted. In terms of biological role, cardiac hormone which may function as a paracrine antifibrotic factor in the heart. Also plays a key role in cardiovascular homeostasis through natriuresis, diuresis, vasorelaxation, and inhibition of renin and aldosterone secretion. Has a cGMP-stimulating activity. The polypeptide is Brain natriuretic peptide (nppb) (Takifugu rubripes (Japanese pufferfish)).